The following is a 910-amino-acid chain: Anoctamin-6 (910 aa).

The Cytoplasmic portion of the chain corresponds to 1–300 (MKKMSRNVLL…YGEKIGIYFA (300 aa)). The chain crosses the membrane as a helical span at residues 301–321 (WLGYYTQMLLLAAVVGVACFL). Topologically, residues 322–375 (YGYLNQDNCTWSKEVCHPDIGGKIIMCPQCDRLCPFWKLNITCESSKKLCIFDS) are extracellular. N329 carries N-linked (GlcNAc...) asparagine glycosylation. Cystine bridges form between C330-C371, C337-C364, C348-C806, C351-C355, and C595-C600. N361 carries N-linked (GlcNAc...) asparagine glycosylation. Residues 376–396 (FGTLVFAVFMGVWVTLFLEFW) form a helical membrane-spanning segment. The Cytoplasmic segment spans residues 397 to 455 (KRRQAELEYEWDTVELQQEEQARPEYEARCTHVVINEITQEEERIPFTAWGKCIRITLC). Residues 456–476 (ASAVFFWILLIIASVIGIIVY) traverse the membrane as a helical segment. Topologically, residues 477–509 (RLSVFIVFSAKLPKNINGTDPIQKYLTPQTATS) are extracellular. N493 carries an N-linked (GlcNAc...) asparagine glycan. Residues 510 to 530 (ITASIISFIIIMILNTIYEKV) form a helical membrane-spanning segment. Residues 531–551 (AIMITNFELPRTQTDYENSLT) are Cytoplasmic-facing. The helical transmembrane segment at 552 to 572 (MKMFLFQFVNYYSSCFYIAFF) threads the bilayer. The Extracellular portion of the chain corresponds to 573 to 601 (KGKFVGYPGDPVYWLGKYRNEECDPGGCL). The chain crosses the membrane as a helical span at residues 602-621 (LELTTQLTIIMGGKAIWNNI). Residues 622 to 663 (QEVLLPWIMNLIGRFHRVSGSEKITPRWEQDYHLQPMGKLGL) are Cytoplasmic-facing. The Ca(2+) site is built by E623, E666, and E669. 2 helical membrane passes run 664-684 (FYEY…VASF) and 685-705 (PLAP…DAWK). Topologically, residues 706–722 (LTTQFRRLVPEKAQDIG) are cytoplasmic. A helical membrane pass occupies residues 723–743 (AWQPIMQGIAILAVVTNAMII). Topologically, residues 744–836 (AFTSDMIPRL…YWHVIAAKLA (93 aa)) are extracellular. N-linked (GlcNAc...) asparagine glycans are attached at residues N777, N790, and N802. Residues 837 to 857 (FIIVMEHVIYSVKFFISYAIP) traverse the membrane as a helical segment. Topologically, residues 858–910 (DVSKRTKSKIQREKYLTQKLLHENHLKDMTKNMGVIAERMIEAVDNNLRPKSE) are cytoplasmic.

This sequence belongs to the anoctamin family. As to quaternary structure, homodimer. As to expression, expressed in embryonic stem cell, fetal liver, retina, chronic myologenous leukemia and intestinal cancer.

The protein resides in the cell membrane. The enzyme catalyses a 1,2-diacyl-sn-glycero-3-phospho-L-serine(in) = a 1,2-diacyl-sn-glycero-3-phospho-L-serine(out). It catalyses the reaction a beta-D-galactosyl-(1&lt;-&gt;1')-N-acylsphing-4-enine(out) = a beta-D-galactosyl-(1&lt;-&gt;1')-N-acylsphing-4-enine(in). It carries out the reaction a 1,2-diacyl-sn-glycero-3-phosphocholine(in) = a 1,2-diacyl-sn-glycero-3-phosphocholine(out). Its activity is regulated as follows. Exhibits synergistic gating by Ca(2+) and voltage. Inhibited by some non-specific cation channel blockers such as: ruthenium red, 2-aminoethyl diphenylborinate (2APB), gadolinium and cadmium ions. With respect to regulation, (Microbial infection) Activated by SARS coronavirus-2/SARS-CoV-2 spike protein. Its function is as follows. Small-conductance calcium-activated nonselective cation (SCAN) channel which acts as a regulator of phospholipid scrambling in platelets and osteoblasts. Phospholipid scrambling results in surface exposure of phosphatidylserine which in platelets is essential to trigger the clotting system whereas in osteoblasts is essential for the deposition of hydroxyapatite during bone mineralization. Has calcium-dependent phospholipid scramblase activity; scrambles phosphatidylserine, phosphatidylcholine and galactosylceramide. Can generate outwardly rectifying chloride channel currents in airway epithelial cells and Jurkat T lymphocytes. In terms of biological role, (Microbial infection) Upon SARS coronavirus-2/SARS-CoV-2 infection, is activated by spike protein which increases the amplitude of spontaneous Ca(2+) signals and is required for spike-mediated syncytia. The sequence is that of Anoctamin-6 from Homo sapiens (Human).